The following is a 195-amino-acid chain: E3 ubiquitin-protein ligase ZNRF1 (195 aa).

Over residues 1 to 10 (MGGKQSSASR) the composition is skewed to polar residues. Positions 1 to 37 (MGGKQSSASRSRAPFPGVSSDDSAVPPSSNFGHFRGG) are disordered. Gly-2 carries the N-myristoyl glycine lipid modification. Positions 18–29 (VSSDDSAVPPSS) are enriched in low complexity. The segment at 152–193 (CVICLEELSQGDTIARLPCLCIYHKSCIDSWFEVNRCCPEHP) adopts an RING-type; atypical zinc-finger fold.

It localises to the endosome. The protein localises to the lysosome. Its subcellular location is the membrane. The enzyme catalyses S-ubiquitinyl-[E2 ubiquitin-conjugating enzyme]-L-cysteine + [acceptor protein]-L-lysine = [E2 ubiquitin-conjugating enzyme]-L-cysteine + N(6)-ubiquitinyl-[acceptor protein]-L-lysine.. It functions in the pathway protein modification; protein ubiquitination. Its function is as follows. E3 ubiquitin-protein ligase that plays a role in neuron cells differentiation. Plays a role in the establishment and maintenance of neuronal transmission and plasticity. The polypeptide is E3 ubiquitin-protein ligase ZNRF1 (znrf1) (Xenopus laevis (African clawed frog)).